Reading from the N-terminus, the 343-residue chain is MSKSSYNHIFILILCLCLRSSSAFTNLNTLSFEESLSPLFGDANLVRSPDDLSVRLLLDRYTGSGFISSNMYQHGFYSSMIKLPADYTAGVVVAFYTSNGDVFEKTHDELDIEFLGNIKGKPWRFQTNLYGNGSTHRGREERYRLWFDPSKEFHRYSILWTPHKIIFWVDDVPIREVIRNDAMGADYPAKPMALYATIWDASDWATSGGKYKANYKFAPFVAEFKSFSLDGCSVDPIQEVPMDCSDSVDFLESQDYSSINSHQRAAMRRFRQRFMYYSYCYDTLRYPEPLPECVIVPAEKDRFKETGRLKFGGTEARERRRNRRQQRRPEIEIESDPDDRKLL.

Residues 1-23 (MSKSSYNHIFILILCLCLRSSSA) form the signal peptide. Residues 24–224 (FTNLNTLSFE…YKFAPFVAEF (201 aa)) form the GH16 domain. Glu-109 acts as the Nucleophile in catalysis. Glu-113 acts as the Proton donor in catalysis. Xyloglucan-binding positions include Glu-113 and 126 to 128 (QTN). N-linked (GlcNAc...) asparagine glycosylation is present at Asn-132. Xyloglucan is bound by residues 136 to 140 (HRGRE), 203 to 204 (DW), Gly-208, and Arg-285. A disulfide bridge links Cys-280 with Cys-293. Residues 306-343 (TGRLKFGGTEARERRRNRRQQRRPEIEIESDPDDRKLL) form a disordered region.

This sequence belongs to the glycosyl hydrolase 16 family. XTH group 3 subfamily. Contains at least one intrachain disulfide bond essential for its enzymatic activity. In terms of tissue distribution, predominantly expressed in green siliques.

It is found in the secreted. The protein resides in the cell wall. It localises to the extracellular space. Its subcellular location is the apoplast. It carries out the reaction breaks a beta-(1-&gt;4) bond in the backbone of a xyloglucan and transfers the xyloglucanyl segment on to O-4 of the non-reducing terminal glucose residue of an acceptor, which can be a xyloglucan or an oligosaccharide of xyloglucan.. In terms of biological role, catalyzes xyloglucan endohydrolysis (XEH) and/or endotransglycosylation (XET). Cleaves and religates xyloglucan polymers, an essential constituent of the primary cell wall, and thereby participates in cell wall construction of growing tissues. The protein is Probable xyloglucan endotransglucosylase/hydrolase protein 30 (XTH30) of Arabidopsis thaliana (Mouse-ear cress).